Here is a 122-residue protein sequence, read N- to C-terminus: MSKALLKFVRLSPTKARLIARQIQGMNAELAIASLEFTPNKAARVLSKVVASAVANGSLDAKSALIVSCRVDAGPVLRRSIPRAKGRATAIRKPTSHVFVEVAEGKEMKSSKSHKKNQAEGK.

The segment at 102 to 122 (VAEGKEMKSSKSHKKNQAEGK) is disordered.

This sequence belongs to the universal ribosomal protein uL22 family. Part of the 50S ribosomal subunit.

Its function is as follows. This protein binds specifically to 23S rRNA; its binding is stimulated by other ribosomal proteins, e.g. L4, L17, and L20. It is important during the early stages of 50S assembly. It makes multiple contacts with different domains of the 23S rRNA in the assembled 50S subunit and ribosome. In terms of biological role, the globular domain of the protein is located near the polypeptide exit tunnel on the outside of the subunit, while an extended beta-hairpin is found that lines the wall of the exit tunnel in the center of the 70S ribosome. The protein is Large ribosomal subunit protein uL22 of Helicobacter pylori (strain HPAG1).